We begin with the raw amino-acid sequence, 293 residues long: MLDSIKIRLQYLLPKQGLTRLAGWGADKQAGWLTQLVIKAFARYYKVNMQEAQDPEFSAYRTFNEFFVRPLRAGARPVVAEENLLAQPADGAISQLGTIHDGQILQAKGHDYSVEALLAGNYMLAAEFQNGQFVTTYLAPRDYHRVHMPCDGVLREMIYVPGDLFSVNPLTAANVPNLFARNERVICIFDTTFGPMAQILVGATIVGSIETVWAGTITPPREGVIRRWTYPQAGAEGAITLEKGQEMGRFKLGSTVINLFAEGKVYLAPQLNSGSVTRMGEVLAEAVPVTPPC.

Catalysis depends on charge relay system; for autoendoproteolytic cleavage activity residues Asp90, His147, and Ser254. Ser254 serves as the catalytic Schiff-base intermediate with substrate; via pyruvic acid; for decarboxylase activity. The residue at position 254 (Ser254) is a Pyruvic acid (Ser); by autocatalysis.

The protein belongs to the phosphatidylserine decarboxylase family. PSD-B subfamily. Prokaryotic type I sub-subfamily. Heterodimer of a large membrane-associated beta subunit and a small pyruvoyl-containing alpha subunit. Pyruvate is required as a cofactor. In terms of processing, is synthesized initially as an inactive proenzyme. Formation of the active enzyme involves a self-maturation process in which the active site pyruvoyl group is generated from an internal serine residue via an autocatalytic post-translational modification. Two non-identical subunits are generated from the proenzyme in this reaction, and the pyruvate is formed at the N-terminus of the alpha chain, which is derived from the carboxyl end of the proenzyme. The autoendoproteolytic cleavage occurs by a canonical serine protease mechanism, in which the side chain hydroxyl group of the serine supplies its oxygen atom to form the C-terminus of the beta chain, while the remainder of the serine residue undergoes an oxidative deamination to produce ammonia and the pyruvoyl prosthetic group on the alpha chain. During this reaction, the Ser that is part of the protease active site of the proenzyme becomes the pyruvoyl prosthetic group, which constitutes an essential element of the active site of the mature decarboxylase.

Its subcellular location is the cell membrane. The catalysed reaction is a 1,2-diacyl-sn-glycero-3-phospho-L-serine + H(+) = a 1,2-diacyl-sn-glycero-3-phosphoethanolamine + CO2. The protein operates within phospholipid metabolism; phosphatidylethanolamine biosynthesis; phosphatidylethanolamine from CDP-diacylglycerol: step 2/2. Its function is as follows. Catalyzes the formation of phosphatidylethanolamine (PtdEtn) from phosphatidylserine (PtdSer). This is Phosphatidylserine decarboxylase proenzyme from Yersinia enterocolitica serotype O:8 / biotype 1B (strain NCTC 13174 / 8081).